The following is a 250-amino-acid chain: Histone H1.2 (250 aa).

A compositionally biased stretch (polar residues) spans 1 to 11 (MSDSAVATSAS). Disordered stretches follow at residues 1–53 (MSDS…QMVD) and 101–250 (KLIQ…ATKK). Residues 27-42 (KKAAATPKSKKSTAAP) show a composition bias toward low complexity. The H15 domain occupies 44–118 (SHPPTQQMVD…GASGSFKLSR (75 aa)). Residues 120 to 133 (AKKDPKPKASAVEK) are compositionally biased toward basic and acidic residues. The segment covering 151 to 161 (STSTTKKAAGA) has biased composition (low complexity). Positions 174-191 (KSVEKKRADKAKAKDAKK) are enriched in basic and acidic residues. Over residues 192–211 (TGTIKAKPTTAKAKSSATKP) the composition is skewed to low complexity. Composition is skewed to basic residues over residues 212–225 (KTPK…KPKK) and 235–250 (TAVK…ATKK).

The protein belongs to the histone H1/H5 family.

It is found in the nucleus. The protein localises to the chromosome. In terms of biological role, histones H1 are necessary for the condensation of nucleosome chains into higher-order structures. The chain is Histone H1.2 (His1.2) from Drosophila virilis (Fruit fly).